A 139-amino-acid chain; its full sequence is Large ribosomal subunit protein uL16 (139 aa).

The protein belongs to the universal ribosomal protein uL16 family. Part of the 50S ribosomal subunit.

Binds 23S rRNA and is also seen to make contacts with the A and possibly P site tRNAs. This Synechocystis sp. (strain ATCC 27184 / PCC 6803 / Kazusa) protein is Large ribosomal subunit protein uL16.